The primary structure comprises 30 residues: Cycloviolacin-O4 (30 aa).

Positions Gly1–Asn30 form a cross-link, cyclopeptide (Gly-Asn). Cystine bridges form between Cys4-Cys20, Cys8-Cys22, and Cys13-Cys27.

Post-translationally, this is a cyclic peptide. In terms of tissue distribution, expressed in petals, petioles, roots and runners but not in leaves (at protein level).

Probably participates in a plant defense mechanism. This is Cycloviolacin-O4 from Viola odorata (Sweet violet).